Here is a 139-residue protein sequence, read N- to C-terminus: Trafficking protein particle complex subunit 2-like protein (139 aa).

The protein belongs to the TRAPP small subunits family. Sedlin subfamily.

The protein resides in the cytoplasm. Its subcellular location is the perinuclear region. It localises to the endoplasmic reticulum. It is found in the golgi apparatus. Functionally, may play a role in vesicular transport from endoplasmic reticulum to Golgi. The chain is Trafficking protein particle complex subunit 2-like protein (TRAPPC2L) from Taeniopygia guttata (Zebra finch).